Here is a 500-residue protein sequence, read N- to C-terminus: Maturase K (500 aa).

This sequence belongs to the intron maturase 2 family. MatK subfamily.

The protein localises to the plastid. The protein resides in the chloroplast. Functionally, usually encoded in the trnK tRNA gene intron. Probably assists in splicing its own and other chloroplast group II introns. This Argentina anserina (Silverweed cinquefoil) protein is Maturase K.